The primary structure comprises 340 residues: DNA-directed RNA polymerase subunit alpha (340 aa).

An alpha N-terminal domain (alpha-NTD) region spans residues 1–233 (MVREEVAVST…DLFIPFLHAE (233 aa)). Residues 266-340 (KKEIALKCIF…GIDLPKNKRF (75 aa)) are alpha C-terminal domain (alpha-CTD).

Belongs to the RNA polymerase alpha chain family. In terms of assembly, in plastids the minimal PEP RNA polymerase catalytic core is composed of four subunits: alpha, beta, beta', and beta''. When a (nuclear-encoded) sigma factor is associated with the core the holoenzyme is formed, which can initiate transcription.

The protein localises to the plastid. It is found in the chloroplast. The enzyme catalyses RNA(n) + a ribonucleoside 5'-triphosphate = RNA(n+1) + diphosphate. Functionally, DNA-dependent RNA polymerase catalyzes the transcription of DNA into RNA using the four ribonucleoside triphosphates as substrates. The sequence is that of DNA-directed RNA polymerase subunit alpha from Calycanthus floridus var. glaucus (Eastern sweetshrub).